Reading from the N-terminus, the 235-residue chain is Transcriptional regulatory protein MalR (235 aa).

Residues 3-119 (NVLIVEDDPM…RFQTALSDYR (117 aa)) form the Response regulatory domain. Asp-54 is modified (4-aspartylphosphate). A DNA-binding region (H-T-H motif) is located at residues 178-197 (TEDLAKHTEISQVSIRKYLK).

Post-translationally, phosphorylated and activated by MalK.

Its subcellular location is the cytoplasm. In terms of biological role, member of a two-component regulatory system MalK/MalR. Activates transcription of maeA, maeN and yflS in presence of malate by binding to their promoter region. This is Transcriptional regulatory protein MalR (malR) from Bacillus subtilis (strain 168).